A 355-amino-acid chain; its full sequence is S-adenosylmethionine:tRNA ribosyltransferase-isomerase (355 aa).

Belongs to the QueA family. As to quaternary structure, monomer.

Its subcellular location is the cytoplasm. It carries out the reaction 7-aminomethyl-7-carbaguanosine(34) in tRNA + S-adenosyl-L-methionine = epoxyqueuosine(34) in tRNA + adenine + L-methionine + 2 H(+). Its pathway is tRNA modification; tRNA-queuosine biosynthesis. Transfers and isomerizes the ribose moiety from AdoMet to the 7-aminomethyl group of 7-deazaguanine (preQ1-tRNA) to give epoxyqueuosine (oQ-tRNA). In Pectobacterium carotovorum subsp. carotovorum (strain PC1), this protein is S-adenosylmethionine:tRNA ribosyltransferase-isomerase.